The chain runs to 255 residues: HTH-type transcriptional regulator SkgA (255 aa).

The HTH merR-type domain occupies 3–72; it reads VYTVKQMARL…LKDIQAALDQ (70 aa). Positions 6–25 form a DNA-binding region, H-T-H motif; that stretch reads VKQMARLSGVSVRALHHYDA.

Regulates the induction of katG (catalase-peroxidase) in stationary phase. The chain is HTH-type transcriptional regulator SkgA (skgA) from Caulobacter vibrioides (strain ATCC 19089 / CIP 103742 / CB 15) (Caulobacter crescentus).